Reading from the N-terminus, the 500-residue chain is MSRPLTGALAHGFLGKSPIWYKVVICLFLVLNPLLLVTIGPVATGWALVLEFIFTLAMALKCYPLMPGGLLLIEALLLQMTTPQALYEELQHNFPVILLLMFMVAGIHFMKELLLFLFSRILLGVRSKAILALLFCVLSAFLSAFLDALTVTAVIISAAVGFYAVYHRVASGANPREDSALESDQQVAHLHREDLDQFRAFLRSLLMHGAVGTALGGVCTLVGEPQNLLIGHEMGWHFVDFFLKVAPVSLPVLGAGLVTCVLLEKVRLFGYGTLMPEPVRRVLTAYAAEDDAARTQAQRIALWVQGLAALILIICLGLHVAEVGLIGLMVIVLITAFTGITDEHRLGRAFQDAMPFTSLLVVFFAVVAVIHQQQLFSPLINWVLALPAEQQPGMLYLANGLLSAISDNVFVATIYITEVKQAFLDGSMSREHFETLAVAINTGTNLPSVATPNGQAAFLFLLTSAIAPLIRLSYGRMVWMALPYTVVMGGLGWWAVTYWL.

The next 11 membrane-spanning stretches (helical) occupy residues 23-43, 53-73, 96-116, 129-149, 150-170, 205-225, 238-258, 311-331, 350-370, 450-470, and 477-497; these read VVICLFLVLNPLLLVTIGPVA, IFTLAMALKCYPLMPGGLLLI, VILLLMFMVAGIHFMKELLLF, AILALLFCVLSAFLSAFLDAL, TVTAVIISAAVGFYAVYHRVA, LLMHGAVGTALGGVCTLVGEP, FVDFFLKVAPVSLPVLGAGLV, ILIICLGLHVAEVGLIGLMVI, FQDAMPFTSLLVVFFAVVAVI, ATPNGQAAFLFLLTSAIAPLI, and MVWMALPYTVVMGGLGWWAVT.

It belongs to the NhaB Na(+)/H(+) (TC 2.A.34) antiporter family.

The protein resides in the cell inner membrane. The catalysed reaction is 2 Na(+)(in) + 3 H(+)(out) = 2 Na(+)(out) + 3 H(+)(in). In terms of biological role, na(+)/H(+) antiporter that extrudes sodium in exchange for external protons. In Pseudomonas putida (strain ATCC 47054 / DSM 6125 / CFBP 8728 / NCIMB 11950 / KT2440), this protein is Na(+)/H(+) antiporter NhaB.